The following is a 234-amino-acid chain: Methylamine utilization ferredoxin-type protein MauM (234 aa).

4Fe-4S ferredoxin-type domains lie at 61–91 (ALAEKDFQSACVRCGLCVEDCPFDILKLASW), 98–131 (GTPFFTARDEPCRMCQDIPCVRACPTGALNPLLT), 140–176 (VAVLVDHETCLNYKGLNCSICVRVCPIRGEAISLKPI), and 184–215 (QIPTVDSTKCTGCGTCEKHCVLSEAAIRVLPR). [4Fe-4S] cluster is bound by residues Cys-71, Cys-74, Cys-77, Cys-81, Cys-109, Cys-112, Cys-117, Cys-121, Cys-149, Cys-157, Cys-160, Cys-164, Cys-193, Cys-196, Cys-199, and Cys-203.

It participates in one-carbon metabolism; methylamine degradation. Functionally, involved in electron transfer. The chain is Methylamine utilization ferredoxin-type protein MauM (mauM) from Methylobacillus flagellatus (strain ATCC 51484 / DSM 6875 / VKM B-1610 / KT).